A 607-amino-acid polypeptide reads, in one-letter code: Glucose-6-phosphate isomerase, glycosomal (607 aa).

Glu-411 acts as the Proton donor in catalysis. Catalysis depends on residues His-442 and Lys-571. A Microbody targeting signal motif is present at residues 605–607 (SHL).

Belongs to the GPI family. In terms of assembly, homodimer.

It localises to the glycosome. The enzyme catalyses alpha-D-glucose 6-phosphate = beta-D-fructose 6-phosphate. It participates in carbohydrate degradation; glycolysis; D-glyceraldehyde 3-phosphate and glycerone phosphate from D-glucose: step 2/4. This Trypanosoma brucei brucei protein is Glucose-6-phosphate isomerase, glycosomal (PGI).